Reading from the N-terminus, the 184-residue chain is Photosystem I assembly protein Ycf4 (184 aa).

2 consecutive transmembrane segments (helical) span residues 19–39 (ISNL…FLVG) and 57–77 (IIFF…LFIS).

Belongs to the Ycf4 family.

It is found in the plastid thylakoid membrane. In terms of biological role, seems to be required for the assembly of the photosystem I complex. This chain is Photosystem I assembly protein Ycf4, found in Cuscuta exaltata (Tall dodder).